The chain runs to 355 residues: Epoxyqueuosine reductase (355 aa).

Catalysis depends on aspartate 143, which acts as the Proton donor. In terms of domain architecture, 4Fe-4S ferredoxin-type spans 185–217; sequence LPLPIDTPATAHCGTCTRCIDICPTQAIIAPHR. Residues cysteine 197, cysteine 200, cysteine 203, cysteine 207, cysteine 223, cysteine 250, cysteine 253, and cysteine 257 each coordinate [4Fe-4S] cluster.

Belongs to the QueG family. Monomer. Requires cob(II)alamin as cofactor. It depends on [4Fe-4S] cluster as a cofactor.

It is found in the cytoplasm. It carries out the reaction epoxyqueuosine(34) in tRNA + AH2 = queuosine(34) in tRNA + A + H2O. Its pathway is tRNA modification; tRNA-queuosine biosynthesis. In terms of biological role, catalyzes the conversion of epoxyqueuosine (oQ) to queuosine (Q), which is a hypermodified base found in the wobble positions of tRNA(Asp), tRNA(Asn), tRNA(His) and tRNA(Tyr). The polypeptide is Epoxyqueuosine reductase (Xanthomonas campestris pv. campestris (strain ATCC 33913 / DSM 3586 / NCPPB 528 / LMG 568 / P 25)).